We begin with the raw amino-acid sequence, 101 residues long: Urease subunit beta (101 aa).

The protein belongs to the urease beta subunit family. In terms of assembly, heterotrimer of UreA (gamma), UreB (beta) and UreC (alpha) subunits. Three heterotrimers associate to form the active enzyme.

The protein localises to the cytoplasm. It carries out the reaction urea + 2 H2O + H(+) = hydrogencarbonate + 2 NH4(+). It participates in nitrogen metabolism; urea degradation; CO(2) and NH(3) from urea (urease route): step 1/1. In Acaryochloris marina (strain MBIC 11017), this protein is Urease subunit beta.